Here is a 903-residue protein sequence, read N- to C-terminus: Protein translocase subunit SecA (903 aa).

Residues Gln87, 105–109 (GEGKT), and Asp507 contribute to the ATP site. Disordered regions lie at residues 565 to 584 (ESRR…GDPG) and 855 to 877 (AEPG…LASQ). Positions 887, 889, 898, and 899 each coordinate Zn(2+).

This sequence belongs to the SecA family. As to quaternary structure, monomer and homodimer. Part of the essential Sec protein translocation apparatus which comprises SecA, SecYEG and auxiliary proteins SecDF-YajC and YidC. It depends on Zn(2+) as a cofactor.

The protein resides in the cell inner membrane. Its subcellular location is the cytoplasm. It carries out the reaction ATP + H2O + cellular proteinSide 1 = ADP + phosphate + cellular proteinSide 2.. In terms of biological role, part of the Sec protein translocase complex. Interacts with the SecYEG preprotein conducting channel. Has a central role in coupling the hydrolysis of ATP to the transfer of proteins into and across the cell membrane, serving both as a receptor for the preprotein-SecB complex and as an ATP-driven molecular motor driving the stepwise translocation of polypeptide chains across the membrane. The chain is Protein translocase subunit SecA from Chromobacterium violaceum (strain ATCC 12472 / DSM 30191 / JCM 1249 / CCUG 213 / NBRC 12614 / NCIMB 9131 / NCTC 9757 / MK).